A 118-amino-acid polypeptide reads, in one-letter code: MASKVKQVILDLTVEKDKKNKKGGKASKQSEEESHHLEEVENKKPGGNVRRKVRRLVPNFLWAIPNRHVDHSEGGEEVGRFVGQVMEAKRKSKEQQMRPYTRFRTPEPDNHYDFCLIP.

The interval 14 to 50 (VEKDKKNKKGGKASKQSEEESHHLEEVENKKPGGNVR) is disordered. Residues 28-44 (KQSEEESHHLEEVENKK) show a composition bias toward basic and acidic residues. The interaction with SIRT2 stretch occupies residues 30–88 (SEEESHHLEEVENKKPGGNVRRKVRRLVPNFLWAIPNRHVDHSEGGEEVGRFVGQVMEA). An interaction with alpha-tubulin region spans residues 30–118 (SEEESHHLEE…DNHYDFCLIP (89 aa)). Cys115 contacts Zn(2+).

This sequence belongs to the BEX family. Interacts with alpha-tubulin. Interacts with SIRT2. Ubiquitinated and degraded by the proteasome.

The protein resides in the cytoplasm. It is found in the cytoskeleton. It localises to the spindle pole. The protein localises to the nucleus. Its function is as follows. May play a role in microtubule deacetylation by negatively regulating the SIRT2 deacetylase activity toward alpha-tubulin and thereby participate in the control of cell cycle progression and genomic stability. In absence of reductive stress, acts as a pseudosubstrate for the CRL2(FEM1B) complex: associates with FEM1B via zinc, thereby preventing association between FEM1B and its substrates. This is Protein BEX4 from Rattus norvegicus (Rat).